The chain runs to 440 residues: Xylose isomerase (440 aa).

Catalysis depends on residues His-101 and Asp-104. The Mg(2+) site is built by Glu-232, Glu-268, His-271, Asp-296, Asp-307, Asp-309, and Asp-339.

Belongs to the xylose isomerase family. Homotetramer. Requires Mg(2+) as cofactor.

It localises to the cytoplasm. It catalyses the reaction alpha-D-xylose = alpha-D-xylulofuranose. In Escherichia coli O157:H7, this protein is Xylose isomerase.